The primary structure comprises 163 residues: 3-hydroxyacyl-[acyl-carrier-protein] dehydratase FabZ (163 aa).

His58 is a catalytic residue.

This sequence belongs to the thioester dehydratase family. FabZ subfamily.

It localises to the cytoplasm. The catalysed reaction is a (3R)-hydroxyacyl-[ACP] = a (2E)-enoyl-[ACP] + H2O. In terms of biological role, involved in unsaturated fatty acids biosynthesis. Catalyzes the dehydration of short chain beta-hydroxyacyl-ACPs and long chain saturated and unsaturated beta-hydroxyacyl-ACPs. This Francisella philomiragia subsp. philomiragia (strain ATCC 25017 / CCUG 19701 / FSC 153 / O#319-036) protein is 3-hydroxyacyl-[acyl-carrier-protein] dehydratase FabZ.